A 335-amino-acid chain; its full sequence is Glyceraldehyde-3-phosphate dehydrogenase (335 aa).

NAD(+)-binding positions include 11–12 (RI), aspartate 33, and lysine 78. Residues 148–150 (SST), threonine 179, 208–209 (TG), and arginine 231 each bind D-glyceraldehyde 3-phosphate. Asparagine 313 serves as a coordination point for NAD(+).

This sequence belongs to the glyceraldehyde-3-phosphate dehydrogenase family. As to quaternary structure, homotetramer.

The protein localises to the cytoplasm. The enzyme catalyses D-glyceraldehyde 3-phosphate + phosphate + NAD(+) = (2R)-3-phospho-glyceroyl phosphate + NADH + H(+). Its pathway is carbohydrate degradation; glycolysis; pyruvate from D-glyceraldehyde 3-phosphate: step 1/5. The polypeptide is Glyceraldehyde-3-phosphate dehydrogenase (GPD) (Pleurotus sajor-caju (Oyster mushroom)).